The primary structure comprises 207 residues: Peptidyl-tRNA hydrolase (207 aa).

Position 14 (Tyr14) interacts with tRNA. His19 acts as the Proton acceptor in catalysis. Positions 64, 66, and 112 each coordinate tRNA.

It belongs to the PTH family. In terms of assembly, monomer.

Its subcellular location is the cytoplasm. It catalyses the reaction an N-acyl-L-alpha-aminoacyl-tRNA + H2O = an N-acyl-L-amino acid + a tRNA + H(+). Hydrolyzes ribosome-free peptidyl-tRNAs (with 1 or more amino acids incorporated), which drop off the ribosome during protein synthesis, or as a result of ribosome stalling. Its function is as follows. Catalyzes the release of premature peptidyl moieties from peptidyl-tRNA molecules trapped in stalled 50S ribosomal subunits, and thus maintains levels of free tRNAs and 50S ribosomes. This chain is Peptidyl-tRNA hydrolase, found in Rhodopseudomonas palustris (strain HaA2).